The chain runs to 442 residues: Elongation factor 1-alpha 1 (442 aa).

The tr-type G domain maps to 5–227 (KEHLNLVVIG…AALDSFKIPK (223 aa)). Positions 14-21 (GHVDSGKS) are G1. 14-21 (GHVDSGKS) serves as a coordination point for GTP. A G2 region spans residues 70 to 74 (GITID). Positions 91-94 (DAPG) are G3. GTP is bound by residues 91 to 95 (DAPGH) and 153 to 156 (NKMD). Positions 153–156 (NKMD) are G4. The segment at 194–196 (SGF) is G5.

The protein belongs to the TRAFAC class translation factor GTPase superfamily. Classic translation factor GTPase family. EF-Tu/EF-1A subfamily.

The protein resides in the cytoplasm. In terms of biological role, this protein promotes the GTP-dependent binding of aminoacyl-tRNA to the A-site of ribosomes during protein biosynthesis. This chain is Elongation factor 1-alpha 1 (EFA1), found in Euplotes crassus.